The primary structure comprises 308 residues: Elongation factor Ts (308 aa).

Residues 80 to 83 (TDFV) form an involved in Mg(2+) ion dislocation from EF-Tu region.

Belongs to the EF-Ts family.

The protein localises to the cytoplasm. Functionally, associates with the EF-Tu.GDP complex and induces the exchange of GDP to GTP. It remains bound to the aminoacyl-tRNA.EF-Tu.GTP complex up to the GTP hydrolysis stage on the ribosome. The polypeptide is Elongation factor Ts (Erythrobacter litoralis (strain HTCC2594)).